The primary structure comprises 125 residues: Protein JAZ13 (125 aa).

An EAR motif is present at residues 6 to 10 (LDLHL). The disordered stretch occupies residues 99-125 (KKRSKSFTLTPNYTSSTSSSSSSLHNF). Positions 112-125 (TSSTSSSSSSLHNF) are enriched in low complexity.

In terms of assembly, monomer. Lack of homodimerization, and very weak or no interaction with AFPH2/NINJA and other JAZ proteins. Interacts (via EAR motif) with TPL. Interacts (via jas motif) with MYC2. Phosphorylated at multiple serine residues.

Its function is as follows. Non-TIFY functional repressor of jasmonate (JA)-mediated growth and defense responses. Intrinsically resistant to JA-induced turnover, probably due to the absence of the canonical degron that strongly interacts with COI1 in the presence of JA-Ile in the TIFY/JAZ proteins. This Arabidopsis thaliana (Mouse-ear cress) protein is Protein JAZ13.